The chain runs to 209 residues: Uracil phosphoribosyltransferase (209 aa).

5-phospho-alpha-D-ribose 1-diphosphate-binding positions include arginine 79, arginine 104, and 131 to 139 (DPMLATGGS). Residues isoleucine 194 and 199–201 (GDA) each bind uracil. Aspartate 200 is a 5-phospho-alpha-D-ribose 1-diphosphate binding site.

This sequence belongs to the UPRTase family. Requires Mg(2+) as cofactor.

It catalyses the reaction UMP + diphosphate = 5-phospho-alpha-D-ribose 1-diphosphate + uracil. The protein operates within pyrimidine metabolism; UMP biosynthesis via salvage pathway; UMP from uracil: step 1/1. With respect to regulation, allosterically activated by GTP. Functionally, catalyzes the conversion of uracil and 5-phospho-alpha-D-ribose 1-diphosphate (PRPP) to UMP and diphosphate. The protein is Uracil phosphoribosyltransferase of Clostridium beijerinckii (strain ATCC 51743 / NCIMB 8052) (Clostridium acetobutylicum).